Reading from the N-terminus, the 460-residue chain is Heme sensor protein HssS (460 aa).

2 consecutive transmembrane segments (helical) span residues 11-31 and 164-184; these read IYTI…TNII and IFLA…VISS. One can recognise an HAMP domain in the interval 186-238; sequence YAIIKPIQQLKRATERLMHGNFDEVIHVTRKDEFGTLQYRFDKMRLSLKQLDD. A Histidine kinase domain is found at 246–456; the sequence is NVSHEIKTPL…TFTITFKKVP (211 aa). Residue His-249 is modified to Phosphohistidine; by autocatalysis.

Autophosphorylated.

The protein localises to the cell membrane. It carries out the reaction ATP + protein L-histidine = ADP + protein N-phospho-L-histidine.. Member of the two-component regulatory system HssS/HssR involved in intracellular heme homeostasis and tempering of staphylococcal virulence. HssS functions as a heme sensor histidine kinase which is autophosphorylated at a histidine residue and transfers its phosphate group to an aspartate residue of HssR. HssR/HssS activates the expression of hrtAB, an efflux pump, in response to extracellular heme, hemin, hemoglobin or blood. The polypeptide is Heme sensor protein HssS (hssS) (Staphylococcus saprophyticus subsp. saprophyticus (strain ATCC 15305 / DSM 20229 / NCIMB 8711 / NCTC 7292 / S-41)).